We begin with the raw amino-acid sequence, 259 residues long: tRNA pseudouridine synthase A (259 aa).

Asp-52 serves as the catalytic Nucleophile. Tyr-111 provides a ligand contact to substrate.

This sequence belongs to the tRNA pseudouridine synthase TruA family. As to quaternary structure, homodimer.

The enzyme catalyses uridine(38/39/40) in tRNA = pseudouridine(38/39/40) in tRNA. Formation of pseudouridine at positions 38, 39 and 40 in the anticodon stem and loop of transfer RNAs. The protein is tRNA pseudouridine synthase A of Ruegeria sp. (strain TM1040) (Silicibacter sp.).